The sequence spans 396 residues: S-adenosylmethionine synthase (396 aa).

His-16 lines the ATP pocket. Asp-18 is a Mg(2+) binding site. Glu-44 lines the K(+) pocket. L-methionine contacts are provided by Glu-57 and Gln-100. Positions 100–110 (QSVDIAQGVDR) are flexible loop. Residues 165-167 (DAK), Asp-240, 246-247 (RK), Ala-263, and Lys-267 contribute to the ATP site. L-methionine is bound at residue Asp-240. L-methionine is bound at residue Lys-271.

Belongs to the AdoMet synthase family. In terms of assembly, homotetramer; dimer of dimers. It depends on Mg(2+) as a cofactor. K(+) is required as a cofactor.

The protein resides in the cytoplasm. The catalysed reaction is L-methionine + ATP + H2O = S-adenosyl-L-methionine + phosphate + diphosphate. Its pathway is amino-acid biosynthesis; S-adenosyl-L-methionine biosynthesis; S-adenosyl-L-methionine from L-methionine: step 1/1. In terms of biological role, catalyzes the formation of S-adenosylmethionine (AdoMet) from methionine and ATP. The overall synthetic reaction is composed of two sequential steps, AdoMet formation and the subsequent tripolyphosphate hydrolysis which occurs prior to release of AdoMet from the enzyme. This Pseudomonas savastanoi pv. phaseolicola (strain 1448A / Race 6) (Pseudomonas syringae pv. phaseolicola (strain 1448A / Race 6)) protein is S-adenosylmethionine synthase.